Consider the following 172-residue polypeptide: MAHFKEYQVIGRRLPTESVPEPKLFRMRIFASNEVIAKSRYWYFLQKLHKVKKASGEIVSINQINEAHPTKVKNFGVWVRYDSRSGTHNMYKEIRDVSRVAAVETLYQDMAARHRARFRSIHILKVAEIEKTADVKRQYVKQFLTKDLKFPLPHRVQKSTKTFSYKRPSTFY.

S32 carries the post-translational modification Phosphoserine. Residues K125, K131, and K149 each participate in a glycyl lysine isopeptide (Lys-Gly) (interchain with G-Cter in ubiquitin) cross-link.

This sequence belongs to the eukaryotic ribosomal protein eL20 family. In terms of assembly, component of the large ribosomal subunit (LSU). Mature yeast ribosomes consist of a small (40S) and a large (60S) subunit. The 40S small subunit contains 1 molecule of ribosomal RNA (18S rRNA) and 33 different proteins (encoded by 57 genes). The large 60S subunit contains 3 rRNA molecules (25S, 5.8S and 5S rRNA) and 46 different proteins (encoded by 81 genes). eL20 forms multiple interactions with RNA and proteins in the central protuberance, connecting components of core functional centers that are located far apart.

The protein resides in the cytoplasm. Functionally, component of the ribosome, a large ribonucleoprotein complex responsible for the synthesis of proteins in the cell. The small ribosomal subunit (SSU) binds messenger RNAs (mRNAs) and translates the encoded message by selecting cognate aminoacyl-transfer RNA (tRNA) molecules. The large subunit (LSU) contains the ribosomal catalytic site termed the peptidyl transferase center (PTC), which catalyzes the formation of peptide bonds, thereby polymerizing the amino acids delivered by tRNAs into a polypeptide chain. The nascent polypeptides leave the ribosome through a tunnel in the LSU and interact with protein factors that function in enzymatic processing, targeting, and the membrane insertion of nascent chains at the exit of the ribosomal tunnel. In Saccharomyces cerevisiae (strain ATCC 204508 / S288c) (Baker's yeast), this protein is Large ribosomal subunit protein eL20A.